We begin with the raw amino-acid sequence, 270 residues long: Chlorophyll a-b binding protein, chloroplastic (270 aa).

A chloroplast-targeting transit peptide spans 1 to 41 (MASACASSTIAAVAFSSPSSQKNGSIVGATKASFLGGKRLR). A chlorophyll b-binding site is contributed by Trp68. Residues Phe88, Glu107, and His110 each coordinate chlorophyll a. Arg112 lines the chlorophyll b pocket. The chain crosses the membrane as a helical span at residues 113 to 133 (WAMLGAAGIFIPEFLTKIGVL). Gln144 is a chlorophyll a binding site. Residues 146–166 (YFTDTTTLFVIELVLIGWAEG) traverse the membrane as a helical segment. Val155, Glu165, and Arg168 together coordinate chlorophyll b. Positions 221, 222, 225, 227, 239, and 254 each coordinate chlorophyll a. The helical transmembrane segment at 228–248 (LAMLAVMGAWFQHIYTGTGPI) threads the bilayer.

This sequence belongs to the light-harvesting chlorophyll a/b-binding (LHC) protein family. As to quaternary structure, the LHC complex consists of chlorophyll a-b binding proteins. Requires Binds at least 14 chlorophylls (8 Chl-a and 6 Chl-b) and carotenoids such as lutein and neoxanthin. as cofactor. Photoregulated by reversible phosphorylation of its threonine residues.

It localises to the plastid. It is found in the chloroplast thylakoid membrane. Functionally, the light-harvesting complex (LHC) functions as a light receptor, it captures and delivers excitation energy to photosystems with which it is closely associated. The chain is Chlorophyll a-b binding protein, chloroplastic from Petunia hybrida (Petunia).